Here is a 120-residue protein sequence, read N- to C-terminus: uncharacterized protein (120 aa).

Residues 22-44 (ITVASCIGAAQGALFSIASALLL) traverse the membrane as a helical segment. Residue N114 is glycosylated (N-linked (GlcNAc...) asparagine).

It is found in the membrane. This is an uncharacterized protein from Saccharomyces cerevisiae (strain ATCC 204508 / S288c) (Baker's yeast).